The sequence spans 291 residues: ATP phosphoribosyltransferase (291 aa).

Belongs to the ATP phosphoribosyltransferase family. Long subfamily. The cofactor is Mg(2+).

The protein resides in the cytoplasm. The enzyme catalyses 1-(5-phospho-beta-D-ribosyl)-ATP + diphosphate = 5-phospho-alpha-D-ribose 1-diphosphate + ATP. The protein operates within amino-acid biosynthesis; L-histidine biosynthesis; L-histidine from 5-phospho-alpha-D-ribose 1-diphosphate: step 1/9. Feedback inhibited by histidine. In terms of biological role, catalyzes the condensation of ATP and 5-phosphoribose 1-diphosphate to form N'-(5'-phosphoribosyl)-ATP (PR-ATP). Has a crucial role in the pathway because the rate of histidine biosynthesis seems to be controlled primarily by regulation of HisG enzymatic activity. The polypeptide is ATP phosphoribosyltransferase (Geotalea daltonii (strain DSM 22248 / JCM 15807 / FRC-32) (Geobacter daltonii)).